The sequence spans 81 residues: Antimicrobial peptide D1 (81 aa).

The signal sequence occupies residues 1-31 (MAKTVLGIHVTFLTLLFAVLLLNDVMYTPVE). Disulfide bonds link Cys34–Cys81, Cys45–Cys66, Cys51–Cys75, and Cys55–Cys77.

Its function is as follows. Antimicrobial peptide probably active against fungi like B.sorokiniana, F.oxysporum, F.graminearum, F.avenaceum, B.cinerea, P.beta, P.infestans and P.debaryanum. The chain is Antimicrobial peptide D1 from Stellaria media (Common chickweed).